A 739-amino-acid polypeptide reads, in one-letter code: Catalase-peroxidase 2 (739 aa).

Residues 1-26 (MKKSTIPSMSALTLAMSLAFGGAAIA) form the signal peptide. The segment at residues 105 to 227 (WHSAGVYRIF…MGATQMGLIY (123 aa)) is a cross-link (tryptophyl-tyrosyl-methioninium (Trp-Tyr) (with M-253)). H106 serves as the catalytic Proton acceptor. Residues 227–253 (YVNPEGPNGVPDPLASAKEIRDTFGRM) constitute a cross-link (tryptophyl-tyrosyl-methioninium (Tyr-Met) (with W-105)). Residue H268 participates in heme b binding.

It belongs to the peroxidase family. Peroxidase/catalase subfamily. Homodimer or homotetramer. It depends on heme b as a cofactor. Post-translationally, formation of the three residue Trp-Tyr-Met cross-link is important for the catalase, but not the peroxidase activity of the enzyme.

It catalyses the reaction H2O2 + AH2 = A + 2 H2O. It carries out the reaction 2 H2O2 = O2 + 2 H2O. In terms of biological role, bifunctional enzyme with both catalase and broad-spectrum peroxidase activity. The chain is Catalase-peroxidase 2 from Shewanella sp. (strain ANA-3).